A 508-amino-acid chain; its full sequence is Probable cytosol aminopeptidase (508 aa).

The Mn(2+) site is built by Lys276 and Asp281. The active site involves Lys288. Mn(2+)-binding residues include Asp299, Asp358, and Glu360. The active site involves Arg362.

This sequence belongs to the peptidase M17 family. The cofactor is Mn(2+).

It localises to the cytoplasm. It catalyses the reaction Release of an N-terminal amino acid, Xaa-|-Yaa-, in which Xaa is preferably Leu, but may be other amino acids including Pro although not Arg or Lys, and Yaa may be Pro. Amino acid amides and methyl esters are also readily hydrolyzed, but rates on arylamides are exceedingly low.. The enzyme catalyses Release of an N-terminal amino acid, preferentially leucine, but not glutamic or aspartic acids.. Its function is as follows. Presumably involved in the processing and regular turnover of intracellular proteins. Catalyzes the removal of unsubstituted N-terminal amino acids from various peptides. The protein is Probable cytosol aminopeptidase of Chlorobium luteolum (strain DSM 273 / BCRC 81028 / 2530) (Pelodictyon luteolum).